The primary structure comprises 232 residues: Small ribosomal subunit protein uS2 (232 aa).

It belongs to the universal ribosomal protein uS2 family.

The sequence is that of Small ribosomal subunit protein uS2 from Pelotomaculum thermopropionicum (strain DSM 13744 / JCM 10971 / SI).